Consider the following 381-residue polypeptide: Chaperone protein DnaJ (381 aa).

In terms of domain architecture, J spans 5-70 (DYYEVLGLQK…QKRAAYDQYG (66 aa)). Residues 133-211 (GTTKDIQINT…CHGEGRVHKK (79 aa)) form a CR-type zinc finger. 8 residues coordinate Zn(2+): C146, C149, C163, C166, C185, C188, C199, and C202. 4 CXXCXGXG motif repeats span residues 146–153 (CDSCGGSG), 163–170 (CPHCHGSG), 185–192 (CPTCHGSG), and 199–206 (CRSCHGEG).

This sequence belongs to the DnaJ family. As to quaternary structure, homodimer. Zn(2+) is required as a cofactor.

Its subcellular location is the cytoplasm. Participates actively in the response to hyperosmotic and heat shock by preventing the aggregation of stress-denatured proteins and by disaggregating proteins, also in an autonomous, DnaK-independent fashion. Unfolded proteins bind initially to DnaJ; upon interaction with the DnaJ-bound protein, DnaK hydrolyzes its bound ATP, resulting in the formation of a stable complex. GrpE releases ADP from DnaK; ATP binding to DnaK triggers the release of the substrate protein, thus completing the reaction cycle. Several rounds of ATP-dependent interactions between DnaJ, DnaK and GrpE are required for fully efficient folding. Also involved, together with DnaK and GrpE, in the DNA replication of plasmids through activation of initiation proteins. The polypeptide is Chaperone protein DnaJ (Haemophilus influenzae (strain 86-028NP)).